Consider the following 71-residue polypeptide: Small ribosomal subunit protein bS21 (71 aa).

It belongs to the bacterial ribosomal protein bS21 family.

This chain is Small ribosomal subunit protein bS21, found in Nitrosococcus oceani (strain ATCC 19707 / BCRC 17464 / JCM 30415 / NCIMB 11848 / C-107).